The chain runs to 785 residues: Endonuclease MutS2 (785 aa).

Gly335–Thr342 lines the ATP pocket. Positions Leu710–Lys785 constitute a Smr domain.

The protein belongs to the DNA mismatch repair MutS family. MutS2 subfamily. In terms of assembly, homodimer. Binds to stalled ribosomes, contacting rRNA.

Functionally, endonuclease that is involved in the suppression of homologous recombination and thus may have a key role in the control of bacterial genetic diversity. In terms of biological role, acts as a ribosome collision sensor, splitting the ribosome into its 2 subunits. Detects stalled/collided 70S ribosomes which it binds and splits by an ATP-hydrolysis driven conformational change. Acts upstream of the ribosome quality control system (RQC), a ribosome-associated complex that mediates the extraction of incompletely synthesized nascent chains from stalled ribosomes and their subsequent degradation. Probably generates substrates for RQC. In Listeria monocytogenes serotype 4a (strain HCC23), this protein is Endonuclease MutS2.